A 443-amino-acid chain; its full sequence is Glutamyl-tRNA reductase (443 aa).

Residues 49–52, Ser109, 114–116, and Gln120 each bind substrate; these read TCNR and EQQ. The active-site Nucleophile is the Cys50. An NADP(+)-binding site is contributed by 189 to 194; it reads GAGSMG.

It belongs to the glutamyl-tRNA reductase family. Homodimer.

It catalyses the reaction (S)-4-amino-5-oxopentanoate + tRNA(Glu) + NADP(+) = L-glutamyl-tRNA(Glu) + NADPH + H(+). The protein operates within porphyrin-containing compound metabolism; protoporphyrin-IX biosynthesis; 5-aminolevulinate from L-glutamyl-tRNA(Glu): step 1/2. Functionally, catalyzes the NADPH-dependent reduction of glutamyl-tRNA(Glu) to glutamate 1-semialdehyde (GSA). The chain is Glutamyl-tRNA reductase from Mycobacteroides abscessus (strain ATCC 19977 / DSM 44196 / CCUG 20993 / CIP 104536 / JCM 13569 / NCTC 13031 / TMC 1543 / L948) (Mycobacterium abscessus).